A 677-amino-acid chain; its full sequence is Levanase (677 aa).

A signal peptide spans 1–24 (MKKRLIQVMIMFTLLLTMAFSADA). Substrate contacts are provided by residues 46–49 (WMND), Q65, W73, 105–106 (FS), 171–172 (RD), E223, and W313. The active site involves D49.

This sequence belongs to the glycosyl hydrolase 32 family.

The protein localises to the secreted. The catalysed reaction is Hydrolysis of terminal, non-reducing (2-&gt;1)- and (2-&gt;6)-linked beta-D-fructofuranose residues in fructans.. With respect to regulation, is completely inhibited by Ag(+) and Hg(2+) ions. Exo-fructosidase that can hydrolyze both levan and inulin, leading to the production of free fructose. Is also able to hydrolyze sucrose and to a small extent raffinose, but not melezitose, stachylose, cellobiose, maltose, and lactose. In Bacillus subtilis (strain 168), this protein is Levanase (sacC).